The primary structure comprises 275 residues: Adenosylcobinamide-GDP ribazoletransferase (275 aa).

A run of 6 helical transmembrane segments spans residues 52–72 (VVGV…GVLG), 73–93 (VTPL…NRMM), 126–146 (MGFS…AALV), 181–201 (FGAM…LVAL), 208–228 (VAVW…GIIA), and 251–271 (IGAG…VAVA).

Belongs to the CobS family. Mg(2+) serves as cofactor.

It is found in the cell membrane. It catalyses the reaction alpha-ribazole + adenosylcob(III)inamide-GDP = adenosylcob(III)alamin + GMP + H(+). The catalysed reaction is alpha-ribazole 5'-phosphate + adenosylcob(III)inamide-GDP = adenosylcob(III)alamin 5'-phosphate + GMP + H(+). The protein operates within cofactor biosynthesis; adenosylcobalamin biosynthesis; adenosylcobalamin from cob(II)yrinate a,c-diamide: step 7/7. Its function is as follows. Joins adenosylcobinamide-GDP and alpha-ribazole to generate adenosylcobalamin (Ado-cobalamin). Also synthesizes adenosylcobalamin 5'-phosphate from adenosylcobinamide-GDP and alpha-ribazole 5'-phosphate. The sequence is that of Adenosylcobinamide-GDP ribazoletransferase from Corynebacterium efficiens (strain DSM 44549 / YS-314 / AJ 12310 / JCM 11189 / NBRC 100395).